Consider the following 488-residue polypeptide: (S)-canadine synthase CYP719A21 (488 aa).

A helical membrane pass occupies residues 6–26; the sequence is LWILTLISTILAVFAAVLIIF. Residue cysteine 432 participates in heme binding.

The protein belongs to the cytochrome P450 family. Heme is required as a cofactor.

Its subcellular location is the membrane. It carries out the reaction (S)-tetrahydrocolumbamine + reduced [NADPH--hemoprotein reductase] + O2 = (S)-canadine + oxidized [NADPH--hemoprotein reductase] + 2 H2O + H(+). It participates in alkaloid biosynthesis. Its function is as follows. Cytochrome P450 involved in the biosynthesis of the benzylisoquinoline alkaloid noscapine. Converts (S)-tetrahydrocolumbamine to (S)-canadine. The sequence is that of (S)-canadine synthase CYP719A21 from Papaver somniferum (Opium poppy).